Consider the following 469-residue polypeptide: Glutamine synthetase (469 aa).

Residues 15–96 enclose the GS beta-grasp domain; sequence EDVKFIDVRF…INFFIHDPIT (82 aa). A GS catalytic domain is found at 104 to 469; sequence PRNVAKKAEA…PYEYEQYYDV (366 aa). Positions 129 and 131 each coordinate Mg(2+). E205 contributes to the ATP binding site. The Mg(2+) site is built by E210 and E218. An ATP-binding site is contributed by 221 to 223; the sequence is YKF. L-glutamate is bound by residues 262–263 and G263; that span reads NG. H267 is a binding site for Mg(2+). ATP contacts are provided by residues 269–271 and S271; that span reads HQS. L-glutamate is bound by residues R320, E326, and R338. Residues R338, R343, and K352 each contribute to the ATP site. A Mg(2+)-binding site is contributed by E357. R359 lines the L-glutamate pocket. Y397 is modified (O-AMP-tyrosine).

It belongs to the glutamine synthetase family. In terms of assembly, oligomer of 12 subunits arranged in the form of two hexagons. Mg(2+) serves as cofactor.

The protein localises to the cytoplasm. The catalysed reaction is L-glutamate + NH4(+) + ATP = L-glutamine + ADP + phosphate + H(+). Its activity is regulated as follows. The activity of this enzyme could be controlled by adenylation under conditions of abundant glutamine. Functionally, catalyzes the ATP-dependent biosynthesis of glutamine from glutamate and ammonia. This chain is Glutamine synthetase, found in Streptomyces viridochromogenes.